The sequence spans 399 residues: Brefeldin A resistance protein (399 aa).

Basic and acidic residues-rich tracts occupy residues 1–31 (MTSK…DETS), 49–69 (SKSE…KETT), and 101–130 (KVEE…KESA). Disordered regions lie at residues 1-173 (MTSK…FGAF) and 191-269 (KKFA…SEII). Residues 138–157 (SPFSQFASFSNASSPFSNVS) are compositionally biased toward low complexity. Basic and acidic residues-rich tracts occupy residues 205–217 (SGKE…KSSE) and 241–252 (TKSEPKEADKGS). Residues 253-263 (GDSTKSTMHQL) are compositionally biased toward polar residues. Residues 256–396 (TKSTMHQLSD…VLEAIPKGGR (141 aa)) form the RanBD1 domain.

Post-translationally, phosphorylated.

Its subcellular location is the nucleus. In Schizosaccharomyces pombe (strain 972 / ATCC 24843) (Fission yeast), this protein is Brefeldin A resistance protein (hba1).